The primary structure comprises 394 residues: tRNA-specific adenosine deaminase 1 (394 aa).

The 335-residue stretch at 54-388 (SLGCGTKCIG…TKKPHELLDF (335 aa)) folds into the A to I editase domain. Residue His78 participates in Zn(2+) binding. Glu80 serves as the catalytic Proton donor. The 1D-myo-inositol hexakisphosphate site is built by Arg84 and Arg85. Zn(2+) is bound by residues Cys127 and Cys191. Positions 194, 197, 320, 357, and 381 each coordinate 1D-myo-inositol hexakisphosphate.

The protein belongs to the ADAT1 family. 1D-myo-inositol hexakisphosphate serves as cofactor. In terms of tissue distribution, widely expressed in early embryos, and later concentrates in the central nervous system.

It carries out the reaction adenosine(37) in tRNA(Ala) + H2O + H(+) = inosine(37) in tRNA(Ala) + NH4(+). Functionally, specifically deaminates adenosine-37 to inosine in tRNA-Ala. In Drosophila melanogaster (Fruit fly), this protein is tRNA-specific adenosine deaminase 1.